Here is a 671-residue protein sequence, read N- to C-terminus: Acetyl-coenzyme A synthetase (671 aa).

Residues 1–21 (MPTASASESSSNQPESSNASG) form a disordered region. Residues 221–224 (RRGK), Thr-339, and Asn-363 each bind CoA. Residues 415–417 (GEG), 439–444 (DTWWQT), Asp-528, and Arg-543 contribute to the ATP site. Ser-551 is a CoA binding site. Arg-554 serves as a coordination point for ATP. Val-565, His-567, and Val-570 together coordinate Mg(2+). Arg-611 serves as a coordination point for CoA. The residue at position 636 (Lys-636) is an N6-acetyllysine.

This sequence belongs to the ATP-dependent AMP-binding enzyme family. The cofactor is Mg(2+). In terms of processing, acetylated. Deacetylation by the SIR2-homolog deacetylase activates the enzyme.

The enzyme catalyses acetate + ATP + CoA = acetyl-CoA + AMP + diphosphate. Functionally, catalyzes the conversion of acetate into acetyl-CoA (AcCoA), an essential intermediate at the junction of anabolic and catabolic pathways. AcsA undergoes a two-step reaction. In the first half reaction, AcsA combines acetate with ATP to form acetyl-adenylate (AcAMP) intermediate. In the second half reaction, it can then transfer the acetyl group from AcAMP to the sulfhydryl group of CoA, forming the product AcCoA. The polypeptide is Acetyl-coenzyme A synthetase (Rhodopirellula baltica (strain DSM 10527 / NCIMB 13988 / SH1)).